The sequence spans 491 residues: Neuronal acetylcholine receptor subunit beta-2 (491 aa).

A signal peptide spans 1-18 (MALLRVLCLLAALRRSLC). The Extracellular segment spans residues 19-226 (TDTEERLVEY…ITYDFIIRRK (208 aa)). Residues Asn-44 and Asn-161 are each glycosylated (N-linked (GlcNAc...) asparagine). A disulfide bridge links Cys-148 with Cys-162. Residues 227 to 251 (PLFYTINLIIPCILITSLAILVFYL) traverse the membrane as a helical segment. Residues 252–258 (PSDCGEK) lie on the Cytoplasmic side of the membrane. Residues 259–277 (MTLCISVLLALTVFLLLIS) form a helical membrane-spanning segment. The Extracellular portion of the chain corresponds to 278–292 (KIVPPTSLDVPLVGK). A helical membrane pass occupies residues 293–314 (YLMFTMVLVTFSIVTSVCVLNV). The Cytoplasmic segment spans residues 315–449 (HHRSPTTHTM…WKYVAMVIDR (135 aa)). The helical transmembrane segment at 450 to 468 (LFLWIFVFVCVFGTVGMFL) threads the bilayer.

It belongs to the ligand-gated ion channel (TC 1.A.9) family. Acetylcholine receptor (TC 1.A.9.1) subfamily. Beta-2/CHRNB2 sub-subfamily. In terms of assembly, neuronal AChR is a heteropentamer composed of two different types of subunits: alpha and beta. CHRNB2/Beta-2 subunit can be combined to CHRNA2/alpha-2, CHRNA3/alpha-3 or CHRNA4/alpha-4, CHRNA5/alpha-5, CHRNA6/alpha-6 and CHRNB3/beta-3 to give rise to functional receptors.

It localises to the synaptic cell membrane. Its subcellular location is the cell membrane. It catalyses the reaction Ca(2+)(in) = Ca(2+)(out). The enzyme catalyses K(+)(in) = K(+)(out). The catalysed reaction is Na(+)(in) = Na(+)(out). Activated by a myriad of ligands such as acetylcholine, cytisine, nicotine, choline and epibatidine. nAChR activity is inhibited by the antagonist alpha-conotoxins BuIA, PnIA, PnIC, GID and MII, small disulfide-constrained peptides from cone snails. In terms of biological role, component of neuronal acetylcholine receptors (nAChRs) that function as pentameric, ligand-gated cation channels with high calcium permeability among other activities. nAChRs are excitatory neurotrasnmitter receptors formed by a collection of nAChR subunits known to mediate synaptic transmission in the nervous system and the neuromuscular junction. Each nAchR subunit confers differential attributes to channel properties, including activation, deactivation and desensitization kinetics, pH sensitivity, cation permeability, and binding to allosteric modulators. CHRNB2 forms heteropentameric neuronal acetylcholine receptors with CHRNA2, CHRNA3, CHRNA4 and CHRNA6, as well as CHRNA5 and CHRNB3 as accesory subunits. This is Neuronal acetylcholine receptor subunit beta-2 (CHRNB2) from Gallus gallus (Chicken).